Consider the following 60-residue polypeptide: Large ribosomal subunit protein uL30 (60 aa).

It belongs to the universal ribosomal protein uL30 family. Part of the 50S ribosomal subunit.

The sequence is that of Large ribosomal subunit protein uL30 from Lactobacillus johnsonii (strain CNCM I-12250 / La1 / NCC 533).